A 278-amino-acid chain; its full sequence is Probable endonuclease 4 (278 aa).

Residues His69, His109, Glu145, Asp179, His182, His214, Asp227, His229, and Glu259 each contribute to the Zn(2+) site.

Belongs to the AP endonuclease 2 family. Requires Zn(2+) as cofactor.

The catalysed reaction is Endonucleolytic cleavage to 5'-phosphooligonucleotide end-products.. Its function is as follows. Endonuclease IV plays a role in DNA repair. It cleaves phosphodiester bonds at apurinic or apyrimidinic (AP) sites, generating a 3'-hydroxyl group and a 5'-terminal sugar phosphate. The chain is Probable endonuclease 4 from Phocaeicola vulgatus (strain ATCC 8482 / DSM 1447 / JCM 5826 / CCUG 4940 / NBRC 14291 / NCTC 11154) (Bacteroides vulgatus).